The following is a 630-amino-acid chain: Arginine--tRNA ligase (630 aa).

Residues 120–130 (ANPVHPLHIGH) carry the 'HIGH' region motif.

It belongs to the class-I aminoacyl-tRNA synthetase family.

The protein resides in the cytoplasm. It carries out the reaction tRNA(Arg) + L-arginine + ATP = L-arginyl-tRNA(Arg) + AMP + diphosphate. In Pyrobaculum aerophilum (strain ATCC 51768 / DSM 7523 / JCM 9630 / CIP 104966 / NBRC 100827 / IM2), this protein is Arginine--tRNA ligase.